A 458-amino-acid chain; its full sequence is Argininosuccinate lyase (458 aa).

The protein belongs to the lyase 1 family. Argininosuccinate lyase subfamily.

Its subcellular location is the cytoplasm. The enzyme catalyses 2-(N(omega)-L-arginino)succinate = fumarate + L-arginine. It participates in amino-acid biosynthesis; L-arginine biosynthesis; L-arginine from L-ornithine and carbamoyl phosphate: step 3/3. The polypeptide is Argininosuccinate lyase (Pelobacter propionicus (strain DSM 2379 / NBRC 103807 / OttBd1)).